The chain runs to 132 residues: Large ribosomal subunit protein uL14 (132 aa).

Belongs to the universal ribosomal protein uL14 family. As to quaternary structure, part of the 50S ribosomal subunit. Forms a cluster with proteins L3 and L24e, part of which may contact the 16S rRNA in 2 intersubunit bridges.

Binds to 23S rRNA. Forms part of two intersubunit bridges in the 70S ribosome. This Methanocella arvoryzae (strain DSM 22066 / NBRC 105507 / MRE50) protein is Large ribosomal subunit protein uL14.